We begin with the raw amino-acid sequence, 400 residues long: Argininosuccinate synthase (400 aa).

ATP-binding positions include 6–14 (AYSGGLDTS) and A33. Residues Y84 and S89 each coordinate L-citrulline. ATP is bound at residue G114. L-aspartate contacts are provided by T116, N120, and D121. N120 is a binding site for L-citrulline. L-citrulline-binding residues include R124, S173, S182, E258, and Y270.

This sequence belongs to the argininosuccinate synthase family. Type 1 subfamily. Homotetramer.

The protein resides in the cytoplasm. It carries out the reaction L-citrulline + L-aspartate + ATP = 2-(N(omega)-L-arginino)succinate + AMP + diphosphate + H(+). It participates in amino-acid biosynthesis; L-arginine biosynthesis; L-arginine from L-ornithine and carbamoyl phosphate: step 2/3. The chain is Argininosuccinate synthase from Thermus thermophilus (strain ATCC 27634 / DSM 579 / HB8).